We begin with the raw amino-acid sequence, 378 residues long: Homoserine O-acetyltransferase (378 aa).

Residues 52–337 form the AB hydrolase-1 domain; sequence NAILICHALT…YSQHGHDTFL (286 aa). Residue serine 148 is the Nucleophile of the active site. Arginine 217 is a substrate binding site. Residues aspartate 304 and histidine 333 contribute to the active site. Aspartate 334 is a binding site for substrate.

The protein belongs to the AB hydrolase superfamily. MetX family. In terms of assembly, homodimer.

The protein localises to the cytoplasm. It carries out the reaction L-homoserine + acetyl-CoA = O-acetyl-L-homoserine + CoA. It participates in amino-acid biosynthesis; L-methionine biosynthesis via de novo pathway; O-acetyl-L-homoserine from L-homoserine: step 1/1. In terms of biological role, transfers an acetyl group from acetyl-CoA to L-homoserine, forming acetyl-L-homoserine. The chain is Homoserine O-acetyltransferase from Chloroherpeton thalassium (strain ATCC 35110 / GB-78).